Consider the following 1216-residue polypeptide: Phospholipase D B (1216 aa).

The span at 1-14 (MNLSQEHAINQNLH) shows a compositional bias: polar residues. The tract at residues 1–48 (MNLSQEHAINQNLHKNQKNEEKIEKKTINKDGRGQMNYDGEEGQGEKS) is disordered. The segment covering 17-33 (QKNEEKIEKKTINKDGR) has biased composition (basic and acidic residues). EF-hand domains follow at residues 196–231 (RNAD…MCRG) and 232–267 (TKKE…ISDI). Ca(2+)-binding residues include D209, N211, D213, K215, and E220. The PH domain maps to 347 to 462 (EINMNGQLTK…WVNAIRFHSR (116 aa)). Positions 585-612 (LSWSHHQKNAIIDQQIAFVGGIDICLMR) constitute a PLD phosphodiesterase 1 domain. Catalysis depends on residues H590, K592, and D597. Positions 732 to 844 (VSYGREKPTH…GLKSKNYKNN (113 aa)) are disordered. Over residues 776–789 (NNSTNSENSENSYS) the composition is skewed to low complexity. The span at 790–813 (EFDEEDEEGNQEEEDEDEFDEFEK) shows a compositional bias: acidic residues. Positions 1036–1063 (EQIYVHSKVLIVDDRVAVIGSCNINDRS) constitute a PLD phosphodiesterase 2 domain. Catalysis depends on residues H1041, K1043, and D1048.

It belongs to the phospholipase D family.

It localises to the cytoplasmic vesicle. The protein resides in the cytoplasm. Its subcellular location is the cell cortex. It catalyses the reaction a 1,2-diacyl-sn-glycero-3-phosphocholine + H2O = a 1,2-diacyl-sn-glycero-3-phosphate + choline + H(+). Inhibited by butan-1-ol. Plays a role in cell growth. Hydrolyzes membrane phospholipids, such as PtdCho (phosphatidylcholine), producing the free headgroup and PtdOH (phosphatidic acid; signaling molecule on its own). Involved in the inhibition of actin-based motility and endocytosis. Its inhibition causes complete collapse of F-actin organization. Plays an important role in cell migration by localizing along the anterior cell membrane. Overexpression leads to the inability to aggregate even at higher cell density. Also known as a negative regulator of quorum sensing. The sequence is that of Phospholipase D B (pldB) from Dictyostelium discoideum (Social amoeba).